The primary structure comprises 479 residues: Ribosomal RNA small subunit methyltransferase F (479 aa).

S-adenosyl-L-methionine is bound by residues 125–131 (AAAPGSK), Glu-149, Asp-176, and Asp-194. Cys-247 (nucleophile) is an active-site residue.

This sequence belongs to the class I-like SAM-binding methyltransferase superfamily. RsmB/NOP family.

It localises to the cytoplasm. It carries out the reaction cytidine(1407) in 16S rRNA + S-adenosyl-L-methionine = 5-methylcytidine(1407) in 16S rRNA + S-adenosyl-L-homocysteine + H(+). Its function is as follows. Specifically methylates the cytosine at position 1407 (m5C1407) of 16S rRNA. This chain is Ribosomal RNA small subunit methyltransferase F, found in Shigella boydii serotype 18 (strain CDC 3083-94 / BS512).